Consider the following 548-residue polypeptide: Alpha-1,3-mannosyl-glycoprotein 4-beta-N-acetylglucosaminyltransferase B (548 aa).

Topologically, residues 1–7 (MRLRNGT) are cytoplasmic. A helical; Signal-anchor for type II membrane protein transmembrane segment spans residues 8–28 (FLTLLLFCLCAFLSLSWYAAL). The Lumenal segment spans residues 29-548 (SGQKGDVVDV…LSEIFLKKAD (520 aa)). A coiled-coil region spans residues 36-83 (VDVYQREFLALRDRLHAAEQESLKRSKELNLVLDEIKRAVSERQALRD). Residues asparagine 87 and asparagine 103 are each glycosylated (N-linked (GlcNAc...) asparagine).

Belongs to the glycosyltransferase 54 family. As to quaternary structure, interacts with SLC35A3. A divalent metal cation serves as cofactor. N-glycosylated. Widely expressed. Strongly overexpressed in pancreatic cancer.

It is found in the golgi apparatus membrane. It carries out the reaction an N(4)-{beta-D-GlcNAc-(1-&gt;2)-alpha-D-Man-(1-&gt;3)-[alpha-D-Man-(1-&gt;6)]-beta-D-Man-(1-&gt;4)-beta-D-GlcNAc-(1-&gt;4)-beta-D-GlcNAc}-L-asparaginyl-[protein] + UDP-N-acetyl-alpha-D-glucosamine = an N(4)-{beta-D-GlcNAc-(1-&gt;2)-[beta-D-GlcNAc-(1-&gt;4)]-alpha-D-Man-(1-&gt;3)-[alpha-D-Man-(1-&gt;6)]-beta-D-Man-(1-&gt;4)-beta-D-GlcNAc-(1-&gt;4)-beta-D-GlcNAc}-L-asparaginyl-[protein] + UDP + H(+). The catalysed reaction is N(4)-{beta-D-GlcNAc-(1-&gt;2)-alpha-D-Man-(1-&gt;3)-[beta-D-GlcNAc-(1-&gt;2)-alpha-D-Man-(1-&gt;6)]-beta-D-Man-(1-&gt;4)-beta-D-GlcNAc-(1-&gt;4)-beta-D-GlcNAc}-L-asparaginyl-[protein] + UDP-N-acetyl-alpha-D-glucosamine = N(4)-{beta-D-GlcNAc-(1-&gt;2)-[beta-D-GlcNAc-(1-&gt;4)]-alpha-D-Man-(1-&gt;3)-[beta-D-GlcNAc-(1-&gt;2)-alpha-D-Man-(1-&gt;6)]-beta-D-Man-(1-&gt;4)-beta-D-GlcNAc-(1-&gt;4)-beta-D-GlcNAc}-L-asparaginyl-[protein] + UDP + H(+). It catalyses the reaction an N(4)-{beta-D-GlcNAc-(1-&gt;2)-alpha-D-Man-(1-&gt;3)-[beta-D-GlcNAc-(1-&gt;2)-[beta-D-GlcNAc-(1-&gt;6)]-alpha-D-Man-(1-&gt;6)]-beta-D-Man-(1-&gt;4)-beta-D-GlcNAc-(1-&gt;4)-beta-D-GlcNAc}-L-asparaginyl-[protein] + UDP-N-acetyl-alpha-D-glucosamine = an N(4)-{beta-D-GlcNAc-(1-&gt;2)-[beta-D-GlcNAc-(1-&gt;4)]-alpha-D-Man-(1-&gt;3)-[beta-D-GlcNAc-(1-&gt;2)-[beta-D-GlcNAc-(1-&gt;6)]-alpha-D-Man-(1-&gt;6)]-beta-D-Man-(1-&gt;4)-beta-D-GlcNAc-(1-&gt;4)-beta-D-GlcNAc}-L-asparaginyl-[protein] + UDP + H(+). The enzyme catalyses an N(4)-{beta-D-GlcNAc-(1-&gt;2)-alpha-D-Man-(1-&gt;3)-[beta-D-GlcNAc-(1-&gt;2)-alpha-D-Man-(1-&gt;6)]-beta-D-Man-(1-&gt;4)-beta-D-GlcNAc-(1-&gt;4)-[alpha-L-Fuc-(1-&gt;6)]-beta-D-GlcNAc}-L-asparaginyl-[protein] + UDP-N-acetyl-alpha-D-glucosamine = N(4)-{beta-D-GlcNAc-(1-&gt;2)-[beta-D-GlcNAc-(1-&gt;4)]-alpha-D-Man-(1-&gt;3)-[beta-D-GlcNAc-(1-&gt;2)-alpha-D-Man-(1-&gt;6)]-beta-D-Man-(1-&gt;4)-beta-D-GlcNAc-(1-&gt;4)-[alpha-L-Fuc-(1-&gt;6)]-beta-D-GlcNAc}-asparaginyl-[protein] + UDP + H(+). It carries out the reaction an N(4)-{beta-D-GlcNAc-(1-&gt;2)-alpha-D-Man-(1-&gt;3)-[beta-D-Gal-(1-&gt;4)-beta-D-GlcNAc-(1-&gt;2)-alpha-D-Man-(1-&gt;6)]-beta-D-Man-(1-&gt;4)-beta-D-GlcNAc-(1-&gt;4)-beta-D-GlcNAc}-L-asparaginyl-[protein] + UDP-N-acetyl-alpha-D-glucosamine = an N(4)-{beta-D-GlcNAc-(1-&gt;2)-[beta-D-GlcNAc-(1-&gt;4)]-alpha-D-Man-(1-&gt;3)-[beta-D-Gal-(1-&gt;4)-beta-D-GlcNAc-(1-&gt;2)-alpha-D-Man-(1-&gt;6)]-beta-D-Man-(1-&gt;4)-beta-D-GlcNAc-(1-&gt;4)-beta-D-GlcNAc}-L-asparaginyl-[protein] + UDP + H(+). The catalysed reaction is N(4)-{beta-D-GlcNAc-(1-&gt;2)-alpha-D-Man-(1-&gt;3)-[alpha-D-Man-(1-&gt;3)-{alpha-D-Man-(1-&gt;6)}-alpha-D-Man-(1-&gt;6)]-beta-D-Man-(1-&gt;4)-beta-D-GlcNAc-(1-&gt;4)-beta-D-GlcNAc}-asparaginyl-[protein] + UDP-N-acetyl-alpha-D-glucosamine = N(4)-{beta-D-GlcNAc-(1-&gt;2)-[beta-D-GlcNAc-(1-&gt;4)]-alpha-D-Man-(1-&gt;3)-[alpha-D-Man-(1-&gt;3)-{alpha-D-Man-(1-&gt;6)}-alpha-D-Man-(1-&gt;6)]-beta-D-Man-(1-&gt;4)-beta-D-GlcNAc-(1-&gt;4)-beta-D-GlcNAc}-asparaginyl-[protein] + UDP + H(+). It catalyses the reaction N(4)-{beta-D-GlcNAc-(1-&gt;2)-alpha-D-Man-(1-&gt;3)-beta-D-Man-(1-&gt;4)-beta-D-GlcNAc-(1-&gt;4)-beta-D-GlcNAc}-asparaginyl-[protein] + UDP-N-acetyl-alpha-D-glucosamine = N(4)-{beta-D-GlcNAc-(1-&gt;2)-[beta-D-GlcNAc-(1-&gt;4)]-alpha-D-Man-(1-&gt;3)-beta-D-Man-(1-&gt;4)-beta-D-GlcNAc-(1-&gt;4)-beta-D-GlcNAc}-asparaginyl-[protein] + UDP + H(+). It participates in protein modification; protein glycosylation. In terms of biological role, glycosyltransferase that catalyzes the transfer of GlcNAc from UDP-GlcNAc to the GlcNAcbeta1-2Manalpha1-3 arm of the core structure of N-linked glycans through a beta1-4 linkage and participates in the production of tri- and tetra-antennary N-linked sugar chains. Prefers complex-type N-glycans over hybrid-types. Has lower affinities for donors or acceptors than MGAT4A, suggesting that, under physiological conditions, it is not the main contributor in N-glycan biosynthesis. The chain is Alpha-1,3-mannosyl-glycoprotein 4-beta-N-acetylglucosaminyltransferase B from Homo sapiens (Human).